The chain runs to 252 residues: Triosephosphate isomerase (252 aa).

10-12 (NWK) serves as a coordination point for substrate. Residue histidine 96 is the Electrophile of the active site. Glutamate 168 (proton acceptor) is an active-site residue. Substrate contacts are provided by residues glycine 174, serine 214, and 235-236 (GG).

Belongs to the triosephosphate isomerase family. In terms of assembly, homodimer.

It localises to the cytoplasm. It catalyses the reaction D-glyceraldehyde 3-phosphate = dihydroxyacetone phosphate. Its pathway is carbohydrate biosynthesis; gluconeogenesis. It participates in carbohydrate degradation; glycolysis; D-glyceraldehyde 3-phosphate from glycerone phosphate: step 1/1. Involved in the gluconeogenesis. Catalyzes stereospecifically the conversion of dihydroxyacetone phosphate (DHAP) to D-glyceraldehyde-3-phosphate (G3P). This chain is Triosephosphate isomerase, found in Streptococcus gordonii (strain Challis / ATCC 35105 / BCRC 15272 / CH1 / DL1 / V288).